The following is a 1238-amino-acid chain: ATP-dependent helicase/nuclease subunit A (1238 aa).

The UvrD-like helicase ATP-binding domain maps to 6-474 (TKWTETQKSA…IKLSENFRSR (469 aa)). Position 27-34 (27-34 (AGAGTGKT)) interacts with ATP. One can recognise a UvrD-like helicase C-terminal domain in the interval 512 to 811 (PFEGNCGGDV…RIMSIHKSKG (300 aa)).

It belongs to the helicase family. AddA subfamily. Heterodimer of AddA and AddB/RexB. It depends on Mg(2+) as a cofactor.

The enzyme catalyses Couples ATP hydrolysis with the unwinding of duplex DNA by translocating in the 3'-5' direction.. It catalyses the reaction ATP + H2O = ADP + phosphate + H(+). In terms of biological role, the heterodimer acts as both an ATP-dependent DNA helicase and an ATP-dependent, dual-direction single-stranded exonuclease. Recognizes the chi site generating a DNA molecule suitable for the initiation of homologous recombination. The AddA nuclease domain is required for chi fragment generation; this subunit has the helicase and 3' -&gt; 5' nuclease activities. The protein is ATP-dependent helicase/nuclease subunit A of Clostridium kluyveri (strain NBRC 12016).